Consider the following 105-residue polypeptide: Antitoxin YfjZ (105 aa).

The protein belongs to the CbeA/YafW/YfjZ antitoxin family.

Its function is as follows. Antitoxin component of a type IV toxin-antitoxin (TA) system. Antitoxin that counteracts the effect of cognate toxin YpjF. Also counteracts the effect of non-cognate toxins CbtA and YfkI. This is Antitoxin YfjZ (yfjZ) from Escherichia coli (strain K12).